We begin with the raw amino-acid sequence, 544 residues long: Lipid II flippase MurJ (544 aa).

14 helical membrane passes run 21 to 41, 49 to 69, 90 to 110, 127 to 147, 169 to 189, 191 to 211, 241 to 261, 297 to 317, 338 to 358, 375 to 395, 404 to 424, 431 to 451, 471 to 491, and 500 to 520; these read ILGMVYLIPFSIMVGATGGAL, YTLFLNIATMGFPAAVSKFVS, VMLVTGMIAFFILYLSAPMFA, VVYVIRMVSLALLVVPIMSLV, IVRIIFLLSATFLILKVFNGG, VIAVGYATFAALIGAFGGLVV, MFFELFSYAAPYVFVGLAIPL, LVMIPVSLATAFGLTLIPTIT, TILFLIIPAVVGISLLSGPTY, ILLWYSPVAILFSLFTVNAAI, FAVVSLVIGVVIKLVLNVPLI, GAILATALGYIASLLYGFIMI, VLSAIMGIAVKIVQWVLGFFI, and AAIVVVIAAAVGGAVYLYCGY.

This sequence belongs to the polysaccharide synthase family.

Its subcellular location is the cell membrane. The protein operates within cell wall biogenesis; peptidoglycan biosynthesis. Involved in peptidoglycan biosynthesis. Transports lipid-linked peptidoglycan precursors from the inner to the outer leaflet of the cytoplasmic membrane. Not essential for growth. The sequence is that of Lipid II flippase MurJ from Bacillus subtilis (strain 168).